A 145-amino-acid chain; its full sequence is UPF0299 membrane protein plu1549 (145 aa).

The next 4 membrane-spanning stretches (helical) occupy residues 6–26 (VLIVGWQYLRAFVLIYLCLLT), 34–54 (LPIIIPGSIIGMLILFVLLAF), 65–85 (GCSLLLKNMTLLFLPIGVGVM), and 95–115 (IIPIVFSCLISTAIVMIIVAY).

Belongs to the UPF0299 family.

It localises to the cell inner membrane. The sequence is that of UPF0299 membrane protein plu1549 from Photorhabdus laumondii subsp. laumondii (strain DSM 15139 / CIP 105565 / TT01) (Photorhabdus luminescens subsp. laumondii).